Reading from the N-terminus, the 267-residue chain is Ribosomal RNA small subunit methyltransferase A (267 aa).

Positions 12, 14, 39, 60, 84, and 110 each coordinate S-adenosyl-L-methionine.

It belongs to the class I-like SAM-binding methyltransferase superfamily. rRNA adenine N(6)-methyltransferase family. RsmA subfamily.

It localises to the cytoplasm. It catalyses the reaction adenosine(1518)/adenosine(1519) in 16S rRNA + 4 S-adenosyl-L-methionine = N(6)-dimethyladenosine(1518)/N(6)-dimethyladenosine(1519) in 16S rRNA + 4 S-adenosyl-L-homocysteine + 4 H(+). In terms of biological role, specifically dimethylates two adjacent adenosines (A1518 and A1519) in the loop of a conserved hairpin near the 3'-end of 16S rRNA in the 30S particle. May play a critical role in biogenesis of 30S subunits. This chain is Ribosomal RNA small subunit methyltransferase A, found in Mesoplasma florum (strain ATCC 33453 / NBRC 100688 / NCTC 11704 / L1) (Acholeplasma florum).